The sequence spans 616 residues: Chaperone protein HscA (616 aa).

This sequence belongs to the heat shock protein 70 family.

Chaperone involved in the maturation of iron-sulfur cluster-containing proteins. Has a low intrinsic ATPase activity which is markedly stimulated by HscB. Involved in the maturation of IscU. In Citrobacter koseri (strain ATCC BAA-895 / CDC 4225-83 / SGSC4696), this protein is Chaperone protein HscA.